The sequence spans 276 residues: Ribosomal RNA small subunit methyltransferase A (276 aa).

S-adenosyl-L-methionine contacts are provided by Asn-27, Leu-29, Gly-54, Glu-75, Asp-101, and Asn-122.

Belongs to the class I-like SAM-binding methyltransferase superfamily. rRNA adenine N(6)-methyltransferase family. RsmA subfamily.

The protein resides in the cytoplasm. It catalyses the reaction adenosine(1518)/adenosine(1519) in 16S rRNA + 4 S-adenosyl-L-methionine = N(6)-dimethyladenosine(1518)/N(6)-dimethyladenosine(1519) in 16S rRNA + 4 S-adenosyl-L-homocysteine + 4 H(+). Its function is as follows. Specifically dimethylates two adjacent adenosines (A1518 and A1519) in the loop of a conserved hairpin near the 3'-end of 16S rRNA in the 30S particle. May play a critical role in biogenesis of 30S subunits. The polypeptide is Ribosomal RNA small subunit methyltransferase A (Brucella abortus (strain S19)).